Reading from the N-terminus, the 125-residue chain is Snaclec alboaggregin-A subunit beta (125 aa).

The C-type lectin domain occupies 1-125 (GFDCPFGWSS…TRYPVCKFXG (125 aa)). Intrachain disulfides connect cysteine 4-cysteine 15, cysteine 32-cysteine 121, and cysteine 98-cysteine 113.

This sequence belongs to the snaclec family. In terms of assembly, heterotetramer of the subunits alpha, alpha', beta and beta'; disulfide-linked. Expressed by the venom gland.

It is found in the secreted. In terms of biological role, potent platelet activator that aggregates platelets via both GPIbalpha (GP1BA) and GPVI (GP6). Induces a tyrosine phosphorylation profile in platelets that resembles this produced by collagen, involving the time dependent tyrosine phosphorylation of Fc receptor gamma chain (FCGR1A), phospholipase Cgamma2 (PLCG2), and LAT. This chain is Snaclec alboaggregin-A subunit beta, found in Trimeresurus albolabris (White-lipped pit viper).